A 110-amino-acid polypeptide reads, in one-letter code: MFINGFVNYPVRTPPNDLLQVVLHGFLRCPLDGSQVDSIGIGHTVHGIVLPGKWVVLMCVLSFLEPPSRRYTFCEADLPYTKITARKAERPSQGGKDYNGTAKSAQSTTV.

The segment at 85–110 (ARKAERPSQGGKDYNGTAKSAQSTTV) is disordered. Polar residues predominate over residues 101 to 110 (TAKSAQSTTV).

This is an uncharacterized protein from Saccharomyces cerevisiae (strain ATCC 204508 / S288c) (Baker's yeast).